Consider the following 112-residue polypeptide: Protein Churchill (112 aa).

The Zn(2+) site is built by Cys-2, Cys-5, Cys-30, Cys-33, His-59, Cys-61, Cys-64, His-66, His-71, Cys-88, and Cys-91.

It belongs to the Churchill family.

In terms of biological role, transcriptional activator that mediates FGF signaling during neural development. Plays a role in the regulation of cell movement. Does not bind DNA by itself. The chain is Protein Churchill (Churc1) from Mus musculus (Mouse).